The following is a 235-amino-acid chain: Phosphoribosylaminoimidazole-succinocarboxamide synthase (235 aa).

This sequence belongs to the SAICAR synthetase family.

It catalyses the reaction 5-amino-1-(5-phospho-D-ribosyl)imidazole-4-carboxylate + L-aspartate + ATP = (2S)-2-[5-amino-1-(5-phospho-beta-D-ribosyl)imidazole-4-carboxamido]succinate + ADP + phosphate + 2 H(+). It functions in the pathway purine metabolism; IMP biosynthesis via de novo pathway; 5-amino-1-(5-phospho-D-ribosyl)imidazole-4-carboxamide from 5-amino-1-(5-phospho-D-ribosyl)imidazole-4-carboxylate: step 1/2. The sequence is that of Phosphoribosylaminoimidazole-succinocarboxamide synthase from Streptococcus pneumoniae (strain ATCC 700669 / Spain 23F-1).